We begin with the raw amino-acid sequence, 651 residues long: Acetyl-coenzyme A synthetase (651 aa).

Residues 189–192, Thr-311, and Asn-335 each bind CoA; that span reads RGGK. ATP is bound by residues 387-389, 411-416, Asp-500, and Arg-515; these read GEP and DTWWQT. A CoA-binding site is contributed by Ser-523. Arg-526 contributes to the ATP binding site. Val-537, His-539, and Val-542 together coordinate Mg(2+). Arg-586 is a binding site for CoA. An N6-acetyllysine modification is found at Lys-611.

Belongs to the ATP-dependent AMP-binding enzyme family. The cofactor is Mg(2+). Post-translationally, acetylated. Deacetylation by the SIR2-homolog deacetylase activates the enzyme.

It catalyses the reaction acetate + ATP + CoA = acetyl-CoA + AMP + diphosphate. Functionally, catalyzes the conversion of acetate into acetyl-CoA (AcCoA), an essential intermediate at the junction of anabolic and catabolic pathways. AcsA undergoes a two-step reaction. In the first half reaction, AcsA combines acetate with ATP to form acetyl-adenylate (AcAMP) intermediate. In the second half reaction, it can then transfer the acetyl group from AcAMP to the sulfhydryl group of CoA, forming the product AcCoA. This chain is Acetyl-coenzyme A synthetase, found in Brucella anthropi (strain ATCC 49188 / DSM 6882 / CCUG 24695 / JCM 21032 / LMG 3331 / NBRC 15819 / NCTC 12168 / Alc 37) (Ochrobactrum anthropi).